Reading from the N-terminus, the 507-residue chain is ATP synthase subunit alpha (507 aa).

ATP is bound at residue 169 to 176 (GDRQTGKT).

Belongs to the ATPase alpha/beta chains family. As to quaternary structure, F-type ATPases have 2 components, CF(1) - the catalytic core - and CF(0) - the membrane proton channel. CF(1) has five subunits: alpha(3), beta(3), gamma(1), delta(1), epsilon(1). CF(0) has three main subunits: a(1), b(2) and c(9-12). The alpha and beta chains form an alternating ring which encloses part of the gamma chain. CF(1) is attached to CF(0) by a central stalk formed by the gamma and epsilon chains, while a peripheral stalk is formed by the delta and b chains.

It localises to the cell inner membrane. It carries out the reaction ATP + H2O + 4 H(+)(in) = ADP + phosphate + 5 H(+)(out). In terms of biological role, produces ATP from ADP in the presence of a proton gradient across the membrane. The alpha chain is a regulatory subunit. The sequence is that of ATP synthase subunit alpha from Magnetococcus marinus (strain ATCC BAA-1437 / JCM 17883 / MC-1).